Reading from the N-terminus, the 36-residue chain is Mating hormone A-factor 1 (36 aa).

A propeptide spanning residues 1–21 (MQPSTATAAPKEKTSSEKKDN) is cleaved from the precursor. Residue Cys33 is modified to Cysteine methyl ester. The S-farnesyl cysteine moiety is linked to residue Cys33. The propeptide at 34 to 36 (VIA) is removed in mature form.

It is found in the cell membrane. The active factor is excreted into the culture medium by haploid cells of the A mating type and acts on cells of the opposite mating type (type alpha). It mediates the conjugation process between the two types by inhibiting the initiation of DNA synthesis in type alpha cells and synchronizing them with type A. This is Mating hormone A-factor 1 (MFA1) from Saccharomyces cerevisiae (strain ATCC 204508 / S288c) (Baker's yeast).